The sequence spans 374 residues: Chaperone protein DnaJ (374 aa).

Residues 5–70 (DYYEVLGVAR…NKRRMYDSHG (66 aa)) form the J domain. The CR-type zinc finger occupies 130–207 (GVERRIEIPT…CHGNGRVEED (78 aa)). Cysteine 143, cysteine 146, cysteine 159, cysteine 162, cysteine 181, cysteine 184, cysteine 195, and cysteine 198 together coordinate Zn(2+). CXXCXGXG motif repeat units follow at residues 143 to 150 (CGDCDGSG), 159 to 166 (CNVCHGRG), 181 to 188 (CHNCGGRG), and 195 to 202 (CKTCHGNG).

It belongs to the DnaJ family. Homodimer. Zn(2+) serves as cofactor.

Its subcellular location is the cytoplasm. Functionally, participates actively in the response to hyperosmotic and heat shock by preventing the aggregation of stress-denatured proteins and by disaggregating proteins, also in an autonomous, DnaK-independent fashion. Unfolded proteins bind initially to DnaJ; upon interaction with the DnaJ-bound protein, DnaK hydrolyzes its bound ATP, resulting in the formation of a stable complex. GrpE releases ADP from DnaK; ATP binding to DnaK triggers the release of the substrate protein, thus completing the reaction cycle. Several rounds of ATP-dependent interactions between DnaJ, DnaK and GrpE are required for fully efficient folding. Also involved, together with DnaK and GrpE, in the DNA replication of plasmids through activation of initiation proteins. The chain is Chaperone protein DnaJ from Stenotrophomonas maltophilia (strain K279a).